A 175-amino-acid polypeptide reads, in one-letter code: Adenine phosphoribosyltransferase (175 aa).

Belongs to the purine/pyrimidine phosphoribosyltransferase family. Homodimer.

It localises to the cytoplasm. It catalyses the reaction AMP + diphosphate = 5-phospho-alpha-D-ribose 1-diphosphate + adenine. The protein operates within purine metabolism; AMP biosynthesis via salvage pathway; AMP from adenine: step 1/1. In terms of biological role, catalyzes a salvage reaction resulting in the formation of AMP, that is energically less costly than de novo synthesis. The protein is Adenine phosphoribosyltransferase of Nitrosospira multiformis (strain ATCC 25196 / NCIMB 11849 / C 71).